Consider the following 57-residue polypeptide: MLFKSLQSITSVNSIQKNQISSVSVGSSQSNNNAALLDAAALVVIPGLLTVAAVAHI.

A helical transmembrane segment spans residues 34–54 (AALLDAAALVVIPGLLTVAAV).

It is found in the membrane. This is an uncharacterized protein from Dictyostelium discoideum (Social amoeba).